The sequence spans 214 residues: Small ribosomal subunit protein uS2 (214 aa).

This sequence belongs to the universal ribosomal protein uS2 family.

The sequence is that of Small ribosomal subunit protein uS2 from Thermofilum pendens (strain DSM 2475 / Hrk 5).